The primary structure comprises 852 residues: Ral guanine nucleotide dissociation stimulator (852 aa).

The N-terminal Ras-GEF domain maps to 57 to 194 (KVRTVKAGTL…RAHLLLAQLE (138 aa)). Residues 324–586 (PPDLVAEQFT…YTLSCELEPP (263 aa)) form the Ras-GEF domain. Disordered stretches follow at residues 606–627 (WSDR…SKSC) and 665–711 (VPES…STTR). Low complexity-rich tracts occupy residues 613–624 (STELSTSSSAHS) and 683–710 (SSPE…VSTT). Positions 736 to 823 (DCCIIRVSLD…YDFILKKRTF (88 aa)) constitute a Ras-associating domain. Phosphotyrosine is present on Tyr752.

In terms of assembly, interacts with RIT1 and RIT2. Interacts with OOG1. Interacts with TRAF3. Interacts with HRAS. In terms of processing, phosphorylation of Tyr-752 by MET blocks HRAS binding.

It is found in the cytoplasm. The protein localises to the nucleus. Functionally, functions as a guanine nucleotide exchange factor (GEF) activating either RalA or RalB GTPases and plays an important role in intracellular transport. Interacts and acts as an effector molecule for R-Ras, H-Ras, K-Ras, and Rap. During bacterial clearance, recognizes 'Lys-33'-linked polyubiquitinated TRAF3 and subsequently mediates assembly of the exocyst complex. The polypeptide is Ral guanine nucleotide dissociation stimulator (Ralgds) (Mus musculus (Mouse)).